Reading from the N-terminus, the 338-residue chain is tRNA (cytidine(56)-2'-O)-methyltransferase (338 aa).

S-adenosyl-L-methionine contacts are provided by residues Leu79 and 105–109; that span reads GSEKV. Residues 188–295 form the HD domain; the sequence is LINHVKSVKE…VAHADNLFAG (108 aa).

It belongs to the aTrm56 family. In terms of assembly, homodimer.

Its subcellular location is the cytoplasm. The enzyme catalyses cytidine(56) in tRNA + S-adenosyl-L-methionine = 2'-O-methylcytidine(56) in tRNA + S-adenosyl-L-homocysteine + H(+). Functionally, specifically catalyzes the AdoMet-dependent 2'-O-ribose methylation of cytidine at position 56 in tRNAs. The protein is tRNA (cytidine(56)-2'-O)-methyltransferase of Thermoplasma volcanium (strain ATCC 51530 / DSM 4299 / JCM 9571 / NBRC 15438 / GSS1).